Reading from the N-terminus, the 158-residue chain is Interleukin-17A (158 aa).

The N-terminal stretch at 1–25 is a signal peptide; sequence MSPGRASSVSLMLLLLLSLAATVKA. An N-linked (GlcNAc...) asparagine glycan is attached at Asn-71. Disulfide bonds link Cys-97–Cys-147 and Cys-102–Cys-149.

The protein belongs to the IL-17 family. Homodimer. Forms complexes with IL17RA and IL17RC receptors with 2:1 binding stoichiometry: two receptor chains for one interleukin molecule. IL17A homodimer preferentially drives the formation of IL17RA-IL17RC heterodimeric receptor complex. IL17A homodimer adopts an asymmetrical ternary structure with one IL17RA molecule, allowing for high affinity interactions of one IL17A monomer with one IL17RA molecule (via D1 and D2 domains), while disfavoring binding of a second IL17RA molecule on the other IL17A monomer. Heterodimer with IL17F. IL17A-IL17F forms complexes with IL17RA-IL17RC, but with lower affinity when compared to IL17A homodimer. IL17RA and IL17RC chains cannot distinguish between IL17A and IL17F molecules, potentially enabling the formation of topologically distinct complexes. Expressed by Th17 cell lineage (at protein level). The expression pattern reflects the differentiation state, with IL17A-IL17F heterodimers produced at higher levels than IL17A-IL17A and IL17F-IL17F dimers in fully differentiated Th17 cells. Expressed in innate lymphoid cells (at protein level). Expressed in gamma-delta T cell subsets (at protein level). Expressed in iNKT cells (at protein level).

The protein localises to the secreted. Its function is as follows. Effector cytokine of innate and adaptive immune system involved in antimicrobial host defense and maintenance of tissue integrity. Signals via IL17RA-IL17RC heterodimeric receptor complex, triggering homotypic interaction of IL17RA and IL17RC chains with TRAF3IP2 adapter. This leads to downstream TRAF6-mediated activation of NF-kappa-B and MAPkinase pathways ultimately resulting in transcriptional activation of cytokines, chemokines, antimicrobial peptides and matrix metalloproteinases, with potential strong immune inflammation. Plays an important role in connecting T cell-mediated adaptive immunity and acute inflammatory response to destroy extracellular bacteria and fungi. As a signature effector cytokine of T-helper 17 cells (Th17), primarily induces neutrophil activation and recruitment at infection and inflammatory sites. In airway epithelium, mediates neutrophil chemotaxis via induction of CXCL1 and CXCL5 chemokines. In secondary lymphoid organs, contributes to germinal center formation by regulating the chemotactic response of B cells to CXCL12 and CXCL13, enhancing retention of B cells within the germinal centers, B cell somatic hypermutation rate and selection toward plasma cells. Effector cytokine of a subset of gamma-delta T cells that functions as part of an inflammatory circuit downstream IL1B, TLR2 and IL23A-IL12B to promote neutrophil recruitment for efficient bacterial clearance. Effector cytokine of innate immune cells including invariant natural killer cell (iNKT) and group 3 innate lymphoid cells that mediate initial neutrophilic inflammation. Involved in the maintenance of the integrity of epithelial barriers during homeostasis and pathogen infection. Upon acute injury, has a direct role in epithelial barrier formation by regulating OCLN localization and tight junction biogenesis. As part of the mucosal immune response induced by commensal bacteria, enhances host's ability to resist pathogenic bacterial and fungal infections by promoting neutrophil recruitment and antimicrobial peptides release. In synergy with IL17F, mediates the production of antimicrobial beta-defensins DEFB1, DEFB103A, and DEFB104A by mucosal epithelial cells, limiting the entry of microbes through the epithelial barriers. Involved in antiviral host defense through various mechanisms. Enhances immunity against West Nile virus by promoting T cell cytotoxicity. May play a beneficial role in influenza A virus (H5N1) infection by enhancing B cell recruitment and immune response in the lung. Contributes to influenza A virus (H1N1) clearance by driving the differentiation of B-1a B cells, providing for production of virus-specific IgM antibodies at first line of host defense. The protein is Interleukin-17A (Il17a) of Mus musculus (Mouse).